A 372-amino-acid chain; its full sequence is NAD(P)H-quinone oxidoreductase subunit 1 (372 aa).

Transmembrane regions (helical) follow at residues 27-47 (AIWM…GVLV), 65-85 (PEYI…KLVF), 97-117 (WLFT…YLIV), 128-148 (VGTG…GLLM), 166-186 (AAQS…IVMM), 204-224 (ILGW…IAAL), 266-286 (ILSA…PIPI), 308-328 (ALGI…AILL), and 347-367 (FLLP…LAFP).

Belongs to the complex I subunit 1 family. As to quaternary structure, NDH-1 is composed of at least 11 different subunits.

It is found in the cellular thylakoid membrane. The enzyme catalyses a plastoquinone + NADH + (n+1) H(+)(in) = a plastoquinol + NAD(+) + n H(+)(out). It carries out the reaction a plastoquinone + NADPH + (n+1) H(+)(in) = a plastoquinol + NADP(+) + n H(+)(out). Functionally, NDH-1 shuttles electrons from an unknown electron donor, via FMN and iron-sulfur (Fe-S) centers, to quinones in the respiratory and/or the photosynthetic chain. The immediate electron acceptor for the enzyme in this species is believed to be plastoquinone. Couples the redox reaction to proton translocation, and thus conserves the redox energy in a proton gradient. This is NAD(P)H-quinone oxidoreductase subunit 1 from Nostoc sp. (strain PCC 7120 / SAG 25.82 / UTEX 2576).